A 350-amino-acid chain; its full sequence is S-adenosylmethionine:tRNA ribosyltransferase-isomerase (350 aa).

The protein belongs to the QueA family. In terms of assembly, monomer.

It localises to the cytoplasm. The enzyme catalyses 7-aminomethyl-7-carbaguanosine(34) in tRNA + S-adenosyl-L-methionine = epoxyqueuosine(34) in tRNA + adenine + L-methionine + 2 H(+). The protein operates within tRNA modification; tRNA-queuosine biosynthesis. Transfers and isomerizes the ribose moiety from AdoMet to the 7-aminomethyl group of 7-deazaguanine (preQ1-tRNA) to give epoxyqueuosine (oQ-tRNA). The polypeptide is S-adenosylmethionine:tRNA ribosyltransferase-isomerase (Vibrio campbellii (strain ATCC BAA-1116)).